Consider the following 376-residue polypeptide: Erythronate-4-phosphate dehydrogenase (376 aa).

Substrate contacts are provided by Ser-45 and Thr-67. An NAD(+)-binding site is contributed by Asp-147. The active site involves Arg-209. Asp-233 serves as a coordination point for NAD(+). Glu-238 is a catalytic residue. Residue His-255 is the Proton donor of the active site. NAD(+) is bound at residue Gly-258. A substrate-binding site is contributed by Tyr-259.

It belongs to the D-isomer specific 2-hydroxyacid dehydrogenase family. PdxB subfamily. Homodimer.

It is found in the cytoplasm. The enzyme catalyses 4-phospho-D-erythronate + NAD(+) = (R)-3-hydroxy-2-oxo-4-phosphooxybutanoate + NADH + H(+). It participates in cofactor biosynthesis; pyridoxine 5'-phosphate biosynthesis; pyridoxine 5'-phosphate from D-erythrose 4-phosphate: step 2/5. Catalyzes the oxidation of erythronate-4-phosphate to 3-hydroxy-2-oxo-4-phosphonooxybutanoate. The polypeptide is Erythronate-4-phosphate dehydrogenase (Shewanella sp. (strain MR-7)).